Here is a 154-residue protein sequence, read N- to C-terminus: Transcriptional repressor NrdR (154 aa).

Residues Cys3–Cys34 fold into a zinc finger. The ATP-cone domain maps to Pro49 to Ala139.

The protein belongs to the NrdR family. Zn(2+) serves as cofactor.

In terms of biological role, negatively regulates transcription of bacterial ribonucleotide reductase nrd genes and operons by binding to NrdR-boxes. This Hydrogenovibrio crunogenus (strain DSM 25203 / XCL-2) (Thiomicrospira crunogena) protein is Transcriptional repressor NrdR.